The following is a 339-amino-acid chain: Dihydroorotate dehydrogenase (quinone) (339 aa).

Residues 62–66 (AGMDK) and Thr86 contribute to the FMN site. Lys66 provides a ligand contact to substrate. 111 to 115 (NRMGF) contributes to the substrate binding site. Residues Asn139 and Asn172 each coordinate FMN. Asn172 provides a ligand contact to substrate. Ser175 acts as the Nucleophile in catalysis. Residue Asn177 coordinates substrate. Positions 217 and 245 each coordinate FMN. 246 to 247 (NT) lines the substrate pocket. FMN is bound by residues Gly268, Gly297, and 318-319 (FS).

The protein belongs to the dihydroorotate dehydrogenase family. Type 2 subfamily. Monomer. It depends on FMN as a cofactor.

Its subcellular location is the cell membrane. It catalyses the reaction (S)-dihydroorotate + a quinone = orotate + a quinol. It functions in the pathway pyrimidine metabolism; UMP biosynthesis via de novo pathway; orotate from (S)-dihydroorotate (quinone route): step 1/1. Functionally, catalyzes the conversion of dihydroorotate to orotate with quinone as electron acceptor. The polypeptide is Dihydroorotate dehydrogenase (quinone) (Shewanella halifaxensis (strain HAW-EB4)).